A 372-amino-acid chain; its full sequence is Cytochrome b (372 aa).

Helical transmembrane passes span 25–45 (FGSM…FLAI), 69–90 (WIMQ…YIHI), 105–125 (WVSG…GYVL), and 170–190 (FFAL…IHVM). Heme b is bound by residues His-75 and His-89. Positions 174 and 188 each coordinate heme b. A ubiquinone is bound at residue His-193. Transmembrane regions (helical) follow at residues 218–238 (YKDT…TSFF), 280–300 (LGGT…PFTH), 312–332 (MAQV…WAAT), and 339–358 (FTTI…IINP).

The protein belongs to the cytochrome b family. As to quaternary structure, the cytochrome bc1 complex contains 3 respiratory subunits (MT-CYB, CYC1 and UQCRFS1), 2 core proteins (UQCRC1 and UQCRC2) and probably 6 low-molecular weight proteins. The cofactor is heme b.

It is found in the mitochondrion inner membrane. Functionally, component of the ubiquinol-cytochrome c reductase complex (complex III or cytochrome b-c1 complex) that is part of the mitochondrial respiratory chain. The b-c1 complex mediates electron transfer from ubiquinol to cytochrome c. Contributes to the generation of a proton gradient across the mitochondrial membrane that is then used for ATP synthesis. The polypeptide is Cytochrome b (MT-CYB) (Heterodon simus (Southern hognose snake)).